We begin with the raw amino-acid sequence, 297 residues long: MAILDEFDEHLALRCGRSEHTRRAYLGDLRSLLTHLEGRGSRLDQLSLPVLRSWLATAAGAGAARTTLARRISAVKAFTAWAKWRGQLAADPAARLQVPRAYRTLPAVLRQDQALQIMAAAKSGAEQGDPLALRDRLIVEMLYATGIRVSELCGLDIDDVDTRHRLVRVLGKGNKQRTAPFGVPAADALRGWLDDGRPALVTVESGPALLLGSRGRRLDVRQARTVVHQTVAVVAGAPDMGPHGLRHSAATHLLEGGADLRVVQELLGHSSLATTQLYTHVAVSRLRVVHDQAHPRA.

The Core-binding (CB) domain maps to 1 to 83 (MAILDEFDEH…AVKAFTAWAK (83 aa)). The Tyr recombinase domain maps to 104–291 (TLPAVLRQDQ…AVSRLRVVHD (188 aa)). Catalysis depends on residues Arg-148, Lys-172, His-243, Arg-246, and His-269. The active-site O-(3'-phospho-DNA)-tyrosine intermediate is Tyr-278.

This sequence belongs to the 'phage' integrase family. XerC subfamily. In terms of assembly, forms a cyclic heterotetrameric complex composed of two molecules of XerC and two molecules of XerD.

It is found in the cytoplasm. Its function is as follows. Site-specific tyrosine recombinase, which acts by catalyzing the cutting and rejoining of the recombining DNA molecules. The XerC-XerD complex is essential to convert dimers of the bacterial chromosome into monomers to permit their segregation at cell division. It also contributes to the segregational stability of plasmids. This Mycobacterium leprae (strain TN) protein is Tyrosine recombinase XerC.